Reading from the N-terminus, the 398-residue chain is Pectate lyase 1 (398 aa).

Positions 1–25 (MGIKHCCYILYFTLALVTLLQPVRS) are cleaved as a signal peptide. A glycan (N-linked (GlcNAc...) asparagine) is linked at N37. An intrachain disulfide couples C55 to C72. Residues D195, D219, and D223 each contribute to the Ca(2+) site. Residue R275 is part of the active site.

It belongs to the polysaccharide lyase 1 family. Amb a subfamily. In terms of assembly, monomer. Ca(2+) serves as cofactor. Post-translationally, the N-terminus is blocked. Pollen and flowers.

It catalyses the reaction Eliminative cleavage of (1-&gt;4)-alpha-D-galacturonan to give oligosaccharides with 4-deoxy-alpha-D-galact-4-enuronosyl groups at their non-reducing ends.. It participates in glycan metabolism; pectin degradation; 2-dehydro-3-deoxy-D-gluconate from pectin: step 2/5. In terms of biological role, has pectate lyase activity. This Ambrosia artemisiifolia (Common ragweed) protein is Pectate lyase 1.